The sequence spans 69 residues: uncharacterized protein (69 aa).

The tract at residues 23–46 (AENEGNRKENRRQMQSRNERGCNV) is disordered. Over residues 26 to 44 (EGNRKENRRQMQSRNERGC) the composition is skewed to basic and acidic residues.

This is an uncharacterized protein from Homo sapiens (Human).